The primary structure comprises 377 residues: GTP 3',8-cyclase (377 aa).

The interval 1–29 (MTTRLYLSPTPPRNDREGASKSTSASIKH) is disordered. Residues 45–271 (RFGRIARDLR…FTLSPAKEPR (227 aa)) enclose the Radical SAM core domain. Arg-54 serves as a coordination point for GTP. 2 residues coordinate [4Fe-4S] cluster: Cys-61 and Cys-65. An S-adenosyl-L-methionine-binding site is contributed by Tyr-67. Residue Cys-68 participates in [4Fe-4S] cluster binding. Arg-105 is a binding site for GTP. S-adenosyl-L-methionine is bound at residue Gly-109. Thr-140 lines the GTP pocket. Position 164 (Ser-164) interacts with S-adenosyl-L-methionine. Residue Lys-201 coordinates GTP. Residue Met-235 coordinates S-adenosyl-L-methionine. 2 residues coordinate [4Fe-4S] cluster: Cys-304 and Cys-307. Position 309-311 (309-311 (RSR)) interacts with GTP. Cys-321 contributes to the [4Fe-4S] cluster binding site.

This sequence belongs to the radical SAM superfamily. MoaA family. Monomer and homodimer. [4Fe-4S] cluster is required as a cofactor.

The catalysed reaction is GTP + AH2 + S-adenosyl-L-methionine = (8S)-3',8-cyclo-7,8-dihydroguanosine 5'-triphosphate + 5'-deoxyadenosine + L-methionine + A + H(+). It participates in cofactor biosynthesis; molybdopterin biosynthesis. Catalyzes the cyclization of GTP to (8S)-3',8-cyclo-7,8-dihydroguanosine 5'-triphosphate. The chain is GTP 3',8-cyclase from Corynebacterium glutamicum (strain ATCC 13032 / DSM 20300 / JCM 1318 / BCRC 11384 / CCUG 27702 / LMG 3730 / NBRC 12168 / NCIMB 10025 / NRRL B-2784 / 534).